Here is a 396-residue protein sequence, read N- to C-terminus: Alanine racemase (396 aa).

Lys-46 functions as the Proton acceptor; specific for D-alanine in the catalytic mechanism. At Lys-46 the chain carries N6-(pyridoxal phosphate)lysine. Arg-145 is a substrate binding site. The active-site Proton acceptor; specific for L-alanine is the Tyr-280. Substrate is bound at residue Met-328.

It belongs to the alanine racemase family. The cofactor is pyridoxal 5'-phosphate.

It catalyses the reaction L-alanine = D-alanine. Its pathway is amino-acid biosynthesis; D-alanine biosynthesis; D-alanine from L-alanine: step 1/1. Functionally, catalyzes the interconversion of L-alanine and D-alanine. May also act on other amino acids. In Brucella ovis (strain ATCC 25840 / 63/290 / NCTC 10512), this protein is Alanine racemase (alr).